Reading from the N-terminus, the 345-residue chain is Anthranilate phosphoribosyltransferase (345 aa).

5-phospho-alpha-D-ribose 1-diphosphate is bound by residues Gly-84, 87-88 (GD), Thr-92, 94-97 (NIST), 112-120 (KHGNRSVSS), and Ser-124. Anthranilate is bound at residue Gly-84. Ser-96 contacts Mg(2+). Asn-115 is an anthranilate binding site. Anthranilate is bound at residue Arg-170. Mg(2+) contacts are provided by Asp-229 and Glu-230.

This sequence belongs to the anthranilate phosphoribosyltransferase family. Homodimer. The cofactor is Mg(2+).

The enzyme catalyses N-(5-phospho-beta-D-ribosyl)anthranilate + diphosphate = 5-phospho-alpha-D-ribose 1-diphosphate + anthranilate. It participates in amino-acid biosynthesis; L-tryptophan biosynthesis; L-tryptophan from chorismate: step 2/5. Its function is as follows. Catalyzes the transfer of the phosphoribosyl group of 5-phosphorylribose-1-pyrophosphate (PRPP) to anthranilate to yield N-(5'-phosphoribosyl)-anthranilate (PRA). The sequence is that of Anthranilate phosphoribosyltransferase from Xanthomonas axonopodis pv. citri (strain 306).